A 327-amino-acid polypeptide reads, in one-letter code: GMP reductase (327 aa).

The active-site Thioimidate intermediate is Cys175. 204-227 is a binding site for NADP(+); it reads IIADGGIRTNGDVAKSIRFGATMV.

It belongs to the IMPDH/GMPR family. GuaC type 2 subfamily.

It carries out the reaction IMP + NH4(+) + NADP(+) = GMP + NADPH + 2 H(+). Functionally, catalyzes the irreversible NADPH-dependent deamination of GMP to IMP. It functions in the conversion of nucleobase, nucleoside and nucleotide derivatives of G to A nucleotides, and in maintaining the intracellular balance of A and G nucleotides. The protein is GMP reductase of Bacillus anthracis.